The following is a 229-amino-acid chain: Cytidylate kinase (229 aa).

12 to 20 lines the ATP pocket; it reads GPSGAGKGT.

Belongs to the cytidylate kinase family. Type 1 subfamily.

The protein resides in the cytoplasm. The enzyme catalyses CMP + ATP = CDP + ADP. The catalysed reaction is dCMP + ATP = dCDP + ADP. This is Cytidylate kinase from Pseudomonas aeruginosa (strain LESB58).